The following is a 273-amino-acid chain: Dermonecrotic toxin LhSicTox-alphaIA2aviii (273 aa).

The active site involves H5. Mg(2+) contacts are provided by E25 and D27. H41 acts as the Nucleophile in catalysis. Disulfide bonds link C45–C51 and C47–C190. A Mg(2+)-binding site is contributed by D85.

This sequence belongs to the arthropod phospholipase D family. Class II subfamily. It depends on Mg(2+) as a cofactor. Expressed by the venom gland.

It localises to the secreted. The catalysed reaction is an N-(acyl)-sphingosylphosphocholine = an N-(acyl)-sphingosyl-1,3-cyclic phosphate + choline. The enzyme catalyses an N-(acyl)-sphingosylphosphoethanolamine = an N-(acyl)-sphingosyl-1,3-cyclic phosphate + ethanolamine. It carries out the reaction a 1-acyl-sn-glycero-3-phosphocholine = a 1-acyl-sn-glycero-2,3-cyclic phosphate + choline. It catalyses the reaction a 1-acyl-sn-glycero-3-phosphoethanolamine = a 1-acyl-sn-glycero-2,3-cyclic phosphate + ethanolamine. Functionally, dermonecrotic toxins cleave the phosphodiester linkage between the phosphate and headgroup of certain phospholipids (sphingolipid and lysolipid substrates), forming an alcohol (often choline) and a cyclic phosphate. This toxin acts on sphingomyelin (SM). It may also act on ceramide phosphoethanolamine (CPE), lysophosphatidylcholine (LPC) and lysophosphatidylethanolamine (LPE), but not on lysophosphatidylserine (LPS), and lysophosphatidylglycerol (LPG). It acts by transphosphatidylation, releasing exclusively cyclic phosphate products as second products. Induces dermonecrosis, hemolysis, increased vascular permeability, edema, inflammatory response, and platelet aggregation. This chain is Dermonecrotic toxin LhSicTox-alphaIA2aviii, found in Loxosceles hirsuta (Recluse spider).